The sequence spans 449 residues: Wilms tumor protein (449 aa).

The interval 48–84 is disordered; sequence YGSLGGPAPPPAPPPPPPPPPHSFIKQEPSWGGAEPH. The span at 54-69 shows a compositional bias: pro residues; that stretch reads PAPPPAPPPPPPPPPH. Glycyl lysine isopeptide (Lys-Gly) (interchain with G-Cter in SUMO) cross-links involve residues Lys-73 and Lys-177. Residues 236–244 carry the 9aaTAD motif; that stretch reads MTWNQMNLG. C2H2-type zinc fingers lie at residues 323–347, 353–377, and 383–405; these read FMCAYPGCNKRYFKLSHLQMHSRKH, YQCDFKDCERRFSRSDQLKRHQRRH, and FQCKTCQRKFSRSDHLKTHTRTH. Important for interaction with target DNA stretches follow at residues 367–381 and 393–401; these read SDQLKRHQRRHTGVK and SRSDHLKTH. The short motif at 408 to 410 is the KTS motif element; it reads KTS. A C2H2-type 4 zinc finger spans residues 414–438; the sequence is FSCRWPSCQKKFARSDELVRHHNMH. A Glycyl lysine isopeptide (Lys-Gly) (interchain with G-Cter in SUMO2) cross-link involves residue Lys-444.

It belongs to the EGR C2H2-type zinc-finger protein family. As to quaternary structure, homodimer. Interacts with WTIP. Interacts with actively translating polysomes. Detected in nuclear ribonucleoprotein (mRNP) particles. Interacts with HNRNPU via the zinc-finger region. Interacts with U2AF2. Interacts with CITED2. Interacts with ZNF224 via the zinc-finger region. Interacts with WTAP and SRY. Interacts with AMER1. Interacts with RBM4. Expressed in the kidney and a subset of hematopoietic cells.

The protein resides in the nucleus. Its subcellular location is the nucleolus. The protein localises to the cytoplasm. It localises to the nucleus speckle. It is found in the nucleoplasm. Its function is as follows. Transcription factor that plays an important role in cellular development and cell survival. Recognizes and binds to the DNA sequence 5'-GCG(T/G)GGGCG-3'. Regulates the expression of numerous target genes, including EPO. Plays an essential role for development of the urogenital system. It has a tumor suppressor as well as an oncogenic role in tumor formation. Function may be isoform-specific: isoforms lacking the KTS motif may act as transcription factors. Isoforms containing the KTS motif may bind mRNA and play a role in mRNA metabolism or splicing. Isoform 1 has lower affinity for DNA, and can bind RNA. The sequence is that of Wilms tumor protein (WT1) from Homo sapiens (Human).